We begin with the raw amino-acid sequence, 422 residues long: UDP-N-acetylglucosamine 1-carboxyvinyltransferase (422 aa).

Residue 23–24 participates in phosphoenolpyruvate binding; that stretch reads KN. UDP-N-acetyl-alpha-D-glucosamine is bound at residue arginine 92. The Proton donor role is filled by cysteine 116. Cysteine 116 bears the 2-(S-cysteinyl)pyruvic acid O-phosphothioketal mark. UDP-N-acetyl-alpha-D-glucosamine-binding positions include 121 to 125, 161 to 164, aspartate 306, and isoleucine 328; these read RPVDL and KVSV.

This sequence belongs to the EPSP synthase family. MurA subfamily.

The protein localises to the cytoplasm. It carries out the reaction phosphoenolpyruvate + UDP-N-acetyl-alpha-D-glucosamine = UDP-N-acetyl-3-O-(1-carboxyvinyl)-alpha-D-glucosamine + phosphate. It functions in the pathway cell wall biogenesis; peptidoglycan biosynthesis. Cell wall formation. Adds enolpyruvyl to UDP-N-acetylglucosamine. This chain is UDP-N-acetylglucosamine 1-carboxyvinyltransferase, found in Aliivibrio fischeri (strain ATCC 700601 / ES114) (Vibrio fischeri).